The primary structure comprises 351 residues: CREB homolog crh-2 (351 aa).

Disordered stretches follow at residues 46-104 (EPCT…EPLG) and 119-149 (SPSA…HQQQ). Residues 82 to 95 (GSSSGSPSSSLSSP) show a composition bias toward low complexity. In terms of domain architecture, bZIP spans 282 to 345 (SLKIVRRKIK…RDLQQKLHQY (64 aa)). Residues 284-304 (KIVRRKIKNKLSAQESRRKRK) are basic motif. Positions 307-314 (IDALEGRL) are leucine-zipper.

This sequence belongs to the bZIP family.

It localises to the nucleus. Functionally, transcription factor. Plays a role in regulating the developmentally arrested larval state known as dauer, when induced by long-term exposure to the Gram-negative bacterium P.aeruginosa PAO1, but dispensable for dauer formation induced by starvation. Involved in regulating expression of microRNA mir-243, during long-term exposure to P.aeruginosa PAO1. The chain is CREB homolog crh-2 from Caenorhabditis elegans.